The chain runs to 145 residues: Small ribosomal subunit protein bS6 (145 aa).

A compositionally biased stretch (basic and acidic residues) spans 113-132; sequence ENMKKNERKAPKEPVKKDEE. The segment at 113–145 is disordered; sequence ENMKKNERKAPKEPVKKDEEENKESEEEITSEE. Over residues 133–145 the composition is skewed to acidic residues; the sequence is ENKESEEEITSEE.

This sequence belongs to the bacterial ribosomal protein bS6 family.

Binds together with bS18 to 16S ribosomal RNA. This is Small ribosomal subunit protein bS6 from Campylobacter hominis (strain ATCC BAA-381 / DSM 21671 / CCUG 45161 / LMG 19568 / NCTC 13146 / CH001A).